A 236-amino-acid chain; its full sequence is Oligogalacturonate-specific porin KdgM (236 aa).

The signal sequence occupies residues 1–20; it reads MKIKLLTLAVASLVSVNALA.

The protein belongs to the oligogalacturonate-specific porin KdgM (TC 1.B.35) family. In terms of assembly, monomer.

It localises to the cell outer membrane. In terms of biological role, porin specific for oligogalacturonides. Also required for full virulence. The protein is Oligogalacturonate-specific porin KdgM (kdgM) of Dickeya dadantii (strain 3937) (Erwinia chrysanthemi (strain 3937)).